The following is a 354-amino-acid chain: Probable butyrate kinase 2 (354 aa).

This sequence belongs to the acetokinase family.

The protein resides in the cytoplasm. The catalysed reaction is butanoate + ATP = butanoyl phosphate + ADP. The chain is Probable butyrate kinase 2 from Caldanaerobacter subterraneus subsp. tengcongensis (strain DSM 15242 / JCM 11007 / NBRC 100824 / MB4) (Thermoanaerobacter tengcongensis).